We begin with the raw amino-acid sequence, 164 residues long: UPF0114 protein YqhA (164 aa).

A run of 3 helical transmembrane segments spans residues 10-32 (YASR…ALAL), 53-75 (LILV…MVMF), and 136-155 (LMWY…VMGY).

Belongs to the UPF0114 family.

It localises to the cell membrane. The chain is UPF0114 protein YqhA from Salmonella typhi.